Consider the following 818-residue polypeptide: Dipeptidyl aminopeptidase B (818 aa).

The Cytoplasmic portion of the chain corresponds to 1–29 (MEGGEEEVERIPDELFDTKKKHLLDKLIR). Residues 30-45 (VGIILVLLIWGTVLLL) traverse the membrane as a helical; Signal-anchor for type II membrane protein segment. At 46-818 (KSIPHHSNTP…KRAFDGQFVK (773 aa)) the chain is on the lumenal side. 7 N-linked (GlcNAc...) asparagine glycosylation sites follow: Asn63, Asn79, Asn110, Asn139, Asn372, Asn392, and Asn421. The active-site Charge relay system is the Ser679. Residue Asn738 is glycosylated (N-linked (GlcNAc...) asparagine). Active-site charge relay system residues include Asp756 and His789.

It belongs to the peptidase S9B family.

Its subcellular location is the vacuole membrane. This is Dipeptidyl aminopeptidase B (DAP2) from Saccharomyces cerevisiae (strain ATCC 204508 / S288c) (Baker's yeast).